Here is a 405-residue protein sequence, read N- to C-terminus: Tryptophan synthase beta chain (405 aa).

N6-(pyridoxal phosphate)lysine is present on K98.

Belongs to the TrpB family. As to quaternary structure, tetramer of two alpha and two beta chains. Requires pyridoxal 5'-phosphate as cofactor.

The catalysed reaction is (1S,2R)-1-C-(indol-3-yl)glycerol 3-phosphate + L-serine = D-glyceraldehyde 3-phosphate + L-tryptophan + H2O. The protein operates within amino-acid biosynthesis; L-tryptophan biosynthesis; L-tryptophan from chorismate: step 5/5. The beta subunit is responsible for the synthesis of L-tryptophan from indole and L-serine. The chain is Tryptophan synthase beta chain from Parvibaculum lavamentivorans (strain DS-1 / DSM 13023 / NCIMB 13966).